The chain runs to 190 residues: MRGLRPALSTFLFLLLITGGVYPLLTTALGQWWFPWQANGSLIREGDTVRGSALIGQNFTGNGYFHGRPSATAEMPYNPQASGGSNLAVSNPELDKQIAARVAELRAANPDASTNVPVELVTASASGLDNNITPQAAAWQIPRVAKARNLSVEQLTQLIAKYSQQPLVKYIGQPVVNIVELNLALDKLDE.

The chain crosses the membrane as a helical span at residues 10–30 (TFLFLLLITGGVYPLLTTALG).

It belongs to the KdpC family. In terms of assembly, the system is composed of three essential subunits: KdpA, KdpB and KdpC.

Its subcellular location is the cell inner membrane. Functionally, part of the high-affinity ATP-driven potassium transport (or Kdp) system, which catalyzes the hydrolysis of ATP coupled with the electrogenic transport of potassium into the cytoplasm. This subunit acts as a catalytic chaperone that increases the ATP-binding affinity of the ATP-hydrolyzing subunit KdpB by the formation of a transient KdpB/KdpC/ATP ternary complex. The protein is Potassium-transporting ATPase KdpC subunit of Escherichia coli O127:H6 (strain E2348/69 / EPEC).